Consider the following 381-residue polypeptide: Chaperone protein DnaJ (381 aa).

The J domain occupies 5–70 (DYYEVLGCDR…QKRGAYDRYG (66 aa)). The CR-type zinc-finger motif lies at 136-214 (GKTAQISIPT…CGGAGRVTRE (79 aa)). Positions 149, 152, 166, 169, 188, 191, 202, and 205 each coordinate Zn(2+). 4 CXXCXGXG motif repeats span residues 149-156 (CEVCSGSG), 166-173 (CRTCNGAG), 188-195 (CPSCQGRG), and 202-209 (CPNCGGAG).

The protein belongs to the DnaJ family. As to quaternary structure, homodimer. Zn(2+) serves as cofactor.

Its subcellular location is the cytoplasm. Participates actively in the response to hyperosmotic and heat shock by preventing the aggregation of stress-denatured proteins and by disaggregating proteins, also in an autonomous, DnaK-independent fashion. Unfolded proteins bind initially to DnaJ; upon interaction with the DnaJ-bound protein, DnaK hydrolyzes its bound ATP, resulting in the formation of a stable complex. GrpE releases ADP from DnaK; ATP binding to DnaK triggers the release of the substrate protein, thus completing the reaction cycle. Several rounds of ATP-dependent interactions between DnaJ, DnaK and GrpE are required for fully efficient folding. Also involved, together with DnaK and GrpE, in the DNA replication of plasmids through activation of initiation proteins. This chain is Chaperone protein DnaJ, found in Azorhizobium caulinodans (strain ATCC 43989 / DSM 5975 / JCM 20966 / LMG 6465 / NBRC 14845 / NCIMB 13405 / ORS 571).